The primary structure comprises 395 residues: Protein PELOTA 2 (395 aa).

The protein belongs to the eukaryotic release factor 1 family. Pelota subfamily. It depends on a divalent metal cation as a cofactor.

The protein resides in the cytoplasm. It is found in the nucleus. In terms of biological role, component of the Pelota-HBS1L complex, a complex that recognizes stalled ribosomes and triggers the No-Go Decay (NGD) pathway. In the Pelota-HBS1L complex, pelo recognizes ribosomes stalled at the 3' end of an mRNA and engages stalled ribosomes by destabilizing mRNA in the mRNA channel. Following ribosome-binding, the Pelota-HBS1L complex promotes the disassembly of stalled ribosomes, followed by degradation of damaged mRNAs as part of the NGD pathway. The chain is Protein PELOTA 2 (PEL2) from Arabidopsis thaliana (Mouse-ear cress).